The primary structure comprises 544 residues: Probable protein kinase UbiB (544 aa).

The Protein kinase domain maps to 123 to 501 (DFDIKPLASA…KRQQGTGKFL (379 aa)). ATP contacts are provided by residues 129–137 (LASASIAQV) and K152. Residue D287 is the Proton acceptor of the active site. 2 consecutive transmembrane segments (helical) span residues 496 to 516 (GTGK…AIWI) and 519 to 539 (QLEP…LLSW).

This sequence belongs to the ABC1 family. UbiB subfamily.

It is found in the cell inner membrane. It functions in the pathway cofactor biosynthesis; ubiquinone biosynthesis [regulation]. Functionally, is probably a protein kinase regulator of UbiI activity which is involved in aerobic coenzyme Q (ubiquinone) biosynthesis. This chain is Probable protein kinase UbiB, found in Vibrio cholerae serotype O1 (strain ATCC 39315 / El Tor Inaba N16961).